The sequence spans 613 residues: MSPHEVIGTVPKNSTTFRTQADEHDDHEEALQNLRTGKYEDWPNEAAFDGLTEERGPIKIAVTGNIPTWAAGSLYRTGPGLYKIDTDAGTTFEMSHWFDGLAHTHRFDIIPNEEGSVDIFYSSRRQAEEMMDVIKKQGTWPYYSFGQKADPCLGFFAKAMAAFKGLREPSGEKWHNNVNVAVHVNPPGLEAVRNIVGTRKPAVAENDANVLGHRPELPKSIWVSTDNSTMKQIDPQTLEPIGWATQDVLHPELTGAMSCAHAQRDPDTGDFFNFNLEFGPKPTYRVFRVDASSGKTEILATIREPSVSPAYIHSLFLSPSFVILCIPTSHFGLSGTQIPWERNLVDAIKPYDPSRKTQWIVIDRKHSKGVVARFETDGRFFFHTVNSFEEKAGSDSSDINLYCDVIDFGSHEFIHSLYLDVILNRDSAAKKFYEDEQRARNSLAHLTRYHFIINPDSPTTNLPVTPTPDPKNHEAFRIPAPHAGEIPTINPLYATRKHRYVYSLPFRGRGTITDAIVKTDTVTREALFWDNPKGHTPGEAIFIPRPGGEEEDDGVLLSLVLDGEKGKSYLLCLDAKTMAEMGRAEVDFAIALGFHGAHVPSGRTLTRVEGPEY.

Residues 1 to 25 (MSPHEVIGTVPKNSTTFRTQADEHD) are disordered. Fe(2+) is bound by residues His-261, His-313, His-383, and His-595.

This sequence belongs to the carotenoid oxygenase family. The cofactor is Fe(2+).

The protein localises to the cytoplasm. The protein resides in the cytosol. It carries out the reaction torulene + O2 = 4'-apo-beta-carotenal + 3-methyl-2-butenal. It participates in carotenoid biosynthesis. Torulene dioxygenase; part of pathway that mediates the biosynthesis of neurosporaxanthin, a carboxylic apocarotenoid acting as an essential protective pigments and leading to orange pigmentation. Cao-2 mediates the cleavage of torulene into beta-apo-4'-carotenal, the aldehyde corresponding to the acidic neurosporaxanthin. Is not able to use gamma-carotene (that it is not desaturated at the C4'-C5' bond) as substrate, which suggests a high specificity of cao-2 in cleaving the C4'-C5' double bond. Neurosporaxanthin is synthesized from geranyl-geranyl pyrophosphate (GGPP) through several enzymatic activities. Phytoene synthase activity performed by the bifunctional enzyme al-2 first produces phytoene from geranyl-geranyl pyrophosphate (GGPP). The phytoene dehydrogenase al-1 then introduces 5 desaturations to lead to 3,4-didehydrolycopene via the intermediates phytofluene, zeta-carotene, neurosporene and lycopene. Al-2 cyclase activity then converts 3,4-didehydrolycopene into torulene. Al-2 can also convet lycopene into gamma-carotene which in turn is converted to beta-carotene by an additional al-2 cyclization reaction. Torulene is the substrate of the dioxidase cao-2 that breaks the molecule, removing five carbon atoms to yield beta-apo-4'-carotenal, whereas the aldehyde dehydrogenase ylo-1 mediates the last step by converting beta-apo-4'-carotenal into neurosporaxanthin. The protein is Carotenoid dioxygenase of Neurospora crassa (strain ATCC 24698 / 74-OR23-1A / CBS 708.71 / DSM 1257 / FGSC 987).